Consider the following 367-residue polypeptide: Aflatoxin B1 aldehyde reductase member 2 (367 aa).

A mitochondrion-targeting transit peptide spans 1–46 (MLRAVSRAVSRAAVRCAWRSGPSVARPLAMSRSPAPRAVSGAPLRP). The disordered stretch occupies residues 27–46 (PLAMSRSPAPRAVSGAPLRP). Ser-40 carries the phosphoserine modification. Residue Thr-48 is modified to Phosphothreonine. NADP(+) is bound at residue Asp-80. Residue Tyr-85 is the Proton donor of the active site. Lys-136 bears the N6-acetyllysine mark. His-149 is a binding site for substrate. NADP(+)-binding positions include 179–180 (SN), Gln-205, 234–244 (NPLAGGLLTGK), and Arg-258. Lys-244 carries the N6-succinyllysine modification. The residue at position 263 (Ser-263) is a Phosphoserine. Substrate-binding residues include Tyr-268 and Arg-271. 326–334 (SSLEQLEQN) contacts NADP(+). Position 367 (Arg-367) interacts with substrate.

It belongs to the aldo/keto reductase family. Aldo/keto reductase 2 subfamily. As to quaternary structure, homodimer. Heterodimer with AKR7A1.

Its subcellular location is the mitochondrion. The protein localises to the golgi apparatus. It is found in the golgi stack. The protein resides in the cytoplasm. The catalysed reaction is 4-hydroxybutanoate + NADP(+) = succinate semialdehyde + NADPH + H(+). In terms of biological role, catalyzes the NADPH-dependent reduction of succinic semialdehyde to gamma-hydroxybutyrate. May have an important role in producing the neuromodulator gamma-hydroxybutyrate (GHB). Has broad substrate specificity. Can reduce the dialdehyde protein-binding form of aflatoxin B1 (AFB1) to the non-binding AFB1 dialcohol. Acts as a 2-carboxybenzaldehyde reductase. The protein is Aflatoxin B1 aldehyde reductase member 2 (Akr7a2) of Rattus norvegicus (Rat).